A 223-amino-acid chain; its full sequence is MKFFIFTCLLAVALAKHKMEHVSSSEEPINIFQEIYKQEKNMAIHPRKEKLCTTSCEEVVRNANEEEYSIRSSSEESAEVAPEEIKITVDDKHYQKALNEINQFYQKFPQYLQYPYQGPIVLNPWDQVKRNAGPFTPTVNREQLSTSEENSKKTIDMESTEVFTKKTKLTEEEKNRLNFLKKISQYYQKFAWPQYLKTVDQHQKAMKPWTQPKTNAIPYVRYL.

An N-terminal signal peptide occupies residues 1–15 (MKFFIFTCLLAVALA). Serine 23, serine 24, serine 25, serine 72, serine 73, serine 74, serine 77, serine 145, serine 147, serine 151, and serine 159 each carry phosphoserine. The segment at residues 77–141 (SAEVAPEEIK…AGPFTPTVNR (65 aa)) is a repeat. Residues 159 to 223 (STEVFTKKTK…TNAIPYVRYL (65 aa)) constitute a repeat.

It belongs to the alpha-casein family. As to expression, mammary gland specific. Secreted in milk.

It is found in the secreted. Functionally, important role in the capacity of milk to transport calcium phosphate. This is Alpha-S2-casein (CSN1S2) from Capra hircus (Goat).